Reading from the N-terminus, the 246-residue chain is NH(3)-dependent NAD(+) synthetase (246 aa).

29-36 lines the ATP pocket; sequence GLSGGIDS. Asp35 lines the Mg(2+) pocket. Residue Arg110 participates in deamido-NAD(+) binding. Residue Thr130 coordinates ATP. Glu135 is a binding site for Mg(2+). The ATP site is built by Lys159 and Ser181.

It belongs to the NAD synthetase family. As to quaternary structure, homodimer.

It catalyses the reaction deamido-NAD(+) + NH4(+) + ATP = AMP + diphosphate + NAD(+) + H(+). The protein operates within cofactor biosynthesis; NAD(+) biosynthesis; NAD(+) from deamido-NAD(+) (ammonia route): step 1/1. In terms of biological role, catalyzes the ATP-dependent amidation of deamido-NAD to form NAD. Uses ammonia as a nitrogen source. This chain is NH(3)-dependent NAD(+) synthetase, found in Campylobacter jejuni subsp. jejuni serotype O:6 (strain 81116 / NCTC 11828).